Reading from the N-terminus, the 151-residue chain is Deoxyuridine 5'-triphosphate nucleotidohydrolase (151 aa).

Residues 70–72 (RSG), Asn83, 87–89 (LID), and Met97 each bind substrate.

Belongs to the dUTPase family. It depends on Mg(2+) as a cofactor.

It carries out the reaction dUTP + H2O = dUMP + diphosphate + H(+). Its pathway is pyrimidine metabolism; dUMP biosynthesis; dUMP from dCTP (dUTP route): step 2/2. In terms of biological role, this enzyme is involved in nucleotide metabolism: it produces dUMP, the immediate precursor of thymidine nucleotides and it decreases the intracellular concentration of dUTP so that uracil cannot be incorporated into DNA. The protein is Deoxyuridine 5'-triphosphate nucleotidohydrolase of Glaesserella parasuis serovar 5 (strain SH0165) (Haemophilus parasuis).